The chain runs to 165 residues: K(+)/H(+) antiporter subunit KhtT (165 aa).

The RCK C-terminal domain occupies 76–161; the sequence is LESIEMAFSD…LKKLIHDFLS (86 aa).

In terms of assembly, the transporter is composed of the integral membrane protein KhtU and the regulatory protein KhtT.

The protein resides in the cell membrane. Its activity is regulated as follows. Binds cyclic di-AMP (c-di-AMP), which may regulate the activity. Its function is as follows. Required for activity of the potassium/proton antiporter KhtU. Involved in protection of the cell from methylglyoxal, a toxic by-product of glycolysis. This chain is K(+)/H(+) antiporter subunit KhtT, found in Bacillus subtilis (strain 168).